The primary structure comprises 270 residues: L-fucose dehydrogenase (270 aa).

Arg19, Ile21, Asp40, Lys41, Asp62, Val63, Asn89, Tyr154, Lys158, Ile187, Thr189, and Leu191 together coordinate NAD(+). Tyr154 serves as the catalytic Proton acceptor.

Belongs to the short-chain dehydrogenases/reductases (SDR) family. As to quaternary structure, homotetramer. Detected in retina.

It localises to the cytoplasm. The enzyme catalyses L-fucose + NAD(+) = L-fucono-1,5-lactone + NADH + H(+). The catalysed reaction is D-arabinose + NAD(+) = D-arabinono-1,5-lactone + NADH + H(+). It carries out the reaction L-galactose + NAD(+) = L-galactono-1,5-lactone + NADH + H(+). It participates in carbohydrate degradation; L-fucose degradation. Functionally, catalyzes the NAD(+)-dependent oxidation of L-fucose, yielding L-fucono-1,5-lactone, which rapidly converts spontaneously to L-fucone-1,4-lactone. Can also act on D-arabinose and L-galactose, with lower catalytic efficiency. Does not use NADPH. May be the initial enzyme of the putative L-fucose degradation pathway in mammals. This Bos taurus (Bovine) protein is L-fucose dehydrogenase (HSD17B14).